The sequence spans 301 residues: Probable alpha-L-glutamate ligase (301 aa).

Residues 104-287 form the ATP-grasp domain; that stretch reads LQLLSRRGVG…VAGLIIQYLE (184 aa). Residues lysine 141, 178–179, aspartate 187, and 211–213 each bind ATP; these read EY and RSN. The Mg(2+) site is built by aspartate 248, glutamate 260, and asparagine 262. Mn(2+) contacts are provided by aspartate 248, glutamate 260, and asparagine 262.

The protein belongs to the RimK family. The cofactor is Mg(2+). It depends on Mn(2+) as a cofactor.

This is Probable alpha-L-glutamate ligase from Stutzerimonas stutzeri (strain A1501) (Pseudomonas stutzeri).